The sequence spans 173 residues: NADH-ubiquinone oxidoreductase chain 6 (173 aa).

The next 5 helical transmembrane spans lie at 1-21 (MTYF…AVAS), 27-47 (YGVV…LSLG), 48-68 (ASFV…VVFV), 87-107 (VIGY…IGGF), and 139-159 (WGAG…FVVL).

This sequence belongs to the complex I subunit 6 family.

The protein localises to the mitochondrion membrane. The enzyme catalyses a ubiquinone + NADH + 5 H(+)(in) = a ubiquinol + NAD(+) + 4 H(+)(out). Functionally, core subunit of the mitochondrial membrane respiratory chain NADH dehydrogenase (Complex I) that is believed to belong to the minimal assembly required for catalysis. Complex I functions in the transfer of electrons from NADH to the respiratory chain. The immediate electron acceptor for the enzyme is believed to be ubiquinone. The sequence is that of NADH-ubiquinone oxidoreductase chain 6 (MT-ND6) from Brachyramphus brevirostris (Kittlitz's murrelet).